The following is a 465-amino-acid chain: Cysteine--tRNA ligase (465 aa).

A Zn(2+)-binding site is contributed by Cys-30. The 'HIGH' region signature appears at 32 to 42 (ITVYDYCHVGH). The Zn(2+) site is built by Cys-214, His-239, and Glu-243. Positions 271–275 (KMSKS) match the 'KMSKS' region motif. Lys-274 provides a ligand contact to ATP.

This sequence belongs to the class-I aminoacyl-tRNA synthetase family. Monomer. Zn(2+) is required as a cofactor.

It is found in the cytoplasm. It carries out the reaction tRNA(Cys) + L-cysteine + ATP = L-cysteinyl-tRNA(Cys) + AMP + diphosphate. The polypeptide is Cysteine--tRNA ligase (Burkholderia ambifaria (strain MC40-6)).